Consider the following 317-residue polypeptide: Sulfate adenylyltransferase subunit 2 (317 aa).

Over residues 1–10 the composition is skewed to basic and acidic residues; that stretch reads MSNAVHETDS. 2 disordered regions span residues 1–21 and 298–317; these read MSNAVHETDSKNTVASKPPLD and RAIDRDQSGSMEKKKREGYF.

Belongs to the PAPS reductase family. CysD subfamily. In terms of assembly, heterodimer composed of CysD, the smaller subunit, and CysN.

It catalyses the reaction sulfate + ATP + H(+) = adenosine 5'-phosphosulfate + diphosphate. Its pathway is sulfur metabolism; hydrogen sulfide biosynthesis; sulfite from sulfate: step 1/3. With CysN forms the ATP sulfurylase (ATPS) that catalyzes the adenylation of sulfate producing adenosine 5'-phosphosulfate (APS) and diphosphate, the first enzymatic step in sulfur assimilation pathway. APS synthesis involves the formation of a high-energy phosphoric-sulfuric acid anhydride bond driven by GTP hydrolysis by CysN coupled to ATP hydrolysis by CysD. The polypeptide is Sulfate adenylyltransferase subunit 2 (Agrobacterium fabrum (strain C58 / ATCC 33970) (Agrobacterium tumefaciens (strain C58))).